A 630-amino-acid polypeptide reads, in one-letter code: tRNA uridine 5-carboxymethylaminomethyl modification enzyme MnmG (630 aa).

Position 13–18 (13–18) interacts with FAD; it reads GGGHAG. NAD(+) is bound at residue 273–287; sequence GPRYCPSIEDKIHRF.

This sequence belongs to the MnmG family. In terms of assembly, homodimer. Heterotetramer of two MnmE and two MnmG subunits. It depends on FAD as a cofactor.

It localises to the cytoplasm. Functionally, NAD-binding protein involved in the addition of a carboxymethylaminomethyl (cmnm) group at the wobble position (U34) of certain tRNAs, forming tRNA-cmnm(5)s(2)U34. In Pseudomonas putida (Arthrobacter siderocapsulatus), this protein is tRNA uridine 5-carboxymethylaminomethyl modification enzyme MnmG.